The following is a 122-amino-acid chain: Large ribosomal subunit protein uL14 (122 aa).

Belongs to the universal ribosomal protein uL14 family. As to quaternary structure, part of the 50S ribosomal subunit. Forms a cluster with proteins L3 and L19. In the 70S ribosome, L14 and L19 interact and together make contacts with the 16S rRNA in bridges B5 and B8.

Its function is as follows. Binds to 23S rRNA. Forms part of two intersubunit bridges in the 70S ribosome. This chain is Large ribosomal subunit protein uL14, found in Hyphomonas neptunium (strain ATCC 15444).